Reading from the N-terminus, the 646-residue chain is Nitrous-oxide reductase (646 aa).

The disordered stretch occupies residues 1-21 (MMSKHPHSPSTPQDETPSVPG). Positions 1–52 (MMSKHPHSPSTPQDETPSVPGRRRFMNSAALAGLATVVACTDKGAPAGSAAA) form a signal peptide, tat-type signal. Cu cation contacts are provided by His140, His141, and His189. Residues Tyr272, Glu275, Met283, Asp289, and Asn342 each coordinate Ca(2+). Cu cation-binding residues include His344, His400, and His452. Ca(2+) contacts are provided by Lys473 and Glu488. Cu cation-binding residues include His513, His592, Cys627, His629, Cys631, His635, and Met638. The tract at residues 551–646 (KKVTVRLTSQ…EMRSRMIVEA (96 aa)) is COX2-like.

Belongs to the NosZ family. This sequence in the C-terminal section; belongs to the cytochrome c oxidase subunit 2 family. In terms of assembly, homodimer. Ca(2+) serves as cofactor. It depends on Cu cation as a cofactor. In terms of processing, predicted to be exported by the Tat system. The position of the signal peptide cleavage has not been experimentally proven.

The protein resides in the periplasm. The catalysed reaction is N2 + 2 Fe(III)-[cytochrome c] + H2O = nitrous oxide + 2 Fe(II)-[cytochrome c] + 2 H(+). It participates in nitrogen metabolism; nitrate reduction (denitrification); dinitrogen from nitrate: step 4/4. Its function is as follows. Nitrous-oxide reductase is part of a bacterial respiratory system which is activated under anaerobic conditions in the presence of nitrate or nitrous oxide. The protein is Nitrous-oxide reductase (nosZ) of Ralstonia nicotianae (strain ATCC BAA-1114 / GMI1000) (Ralstonia solanacearum).